Here is a 465-residue protein sequence, read N- to C-terminus: D-arabinitol 4-dehydrogenase (465 aa).

It belongs to the mannitol dehydrogenase family.

The enzyme catalyses D-arabinitol + NAD(+) = D-xylulose + NADH + H(+). The protein operates within carbohydrate metabolism; D-arabinitol metabolism. The chain is D-arabinitol 4-dehydrogenase (dalD) from Ralstonia nicotianae (strain ATCC BAA-1114 / GMI1000) (Ralstonia solanacearum).